An 807-amino-acid chain; its full sequence is FAD-linked oxidoreductase pytB (807 aa).

The signal sequence occupies residues 1-18; it reads MRFLGIAAVATFSTVVSA. 8 N-linked (GlcNAc...) asparagine glycosylation sites follow: Asn-45, Asn-106, Asn-120, Asn-242, Asn-295, Asn-351, Asn-419, and Asn-699. The FAD-binding PCMH-type domain maps to 60–231; the sequence is FDELPVLLAY…VEFTLSLTSI (172 aa).

It belongs to the oxygen-dependent FAD-linked oxidoreductase family. Requires FAD as cofactor.

Its pathway is secondary metabolite biosynthesis. FAD-linked oxidoreductase; part of the gene cluster that mediates the biosynthesis of pyranterreones, a family of antioxidative compounds. The first step of pyranonigrins biosynthesis is performed by the hybrid PKS-NRPS synthetase pytA that condenses 4 malonyl-CoA units ato the acetyl starter unit by the modular PKS of pytA. The acyl chain is then connected to an L-serine through the amide bond by the modular NRPS of pytA. A tetramic acid is formed and released from the PKS-NRPS pytA to give pyranterreone 5 with the help of the thioesterase pytI. Pyranterreone 5 could be methylated by pytC to afford pyranterreone 6. Both pyranterreones 5 and 6 are subsequently oxidized by the FAD-linked oxidoreductase pytB and the cytochrome P450 monooxygenase pytD to form the fused gamma-pyrone core, resulting in pyranterreones 7 and 11, respectively. The hydroxy group at C-8 of pyranterreones 7 and 11 are dehydrated by the aspartyl protease pytH to form a delta-7 double bond to give pyranterreones 3 and 1, 2 accordingly. The exo-methylene of pyranterreone 3 could be reduced into a pendant methyl by reductase pytE to provide pyranterreone 4, also known as cordylactam. Pyranterreone 4 can be reconverted to pyranterreone 3 through pytB-catalyzed dehydrogenation or further oxidized to pyranterreones 9 and 10. This chain is FAD-linked oxidoreductase pytB, found in Aspergillus terreus (strain NIH 2624 / FGSC A1156).